A 200-amino-acid chain; its full sequence is MARYTGPMWKISRRLGISLSGTGKELQKRPYPPGQHGPGQRRKLSEYGLQLQEKQKLRHMYGVNERQFRKTFEEAGKMPGKHGENFMILLESRLDNLVYRLGLARTRRQARQLVTHGHIIVDGSRVNIPSYRVKPGQTIAVREKSRNLQVIKEALEANNYIPDYLSFDPEKMEGTYTRLPERSELPAEINEALIVEFYSR.

Positions 22–42 (TGKELQKRPYPPGQHGPGQRR) are disordered. An S4 RNA-binding domain is found at 92-152 (SRLDNLVYRL…EKSRNLQVIK (61 aa)).

The protein belongs to the universal ribosomal protein uS4 family. Part of the 30S ribosomal subunit. Contacts protein S5. The interaction surface between S4 and S5 is involved in control of translational fidelity.

In terms of biological role, one of the primary rRNA binding proteins, it binds directly to 16S rRNA where it nucleates assembly of the body of the 30S subunit. With S5 and S12 plays an important role in translational accuracy. This is Small ribosomal subunit protein uS4 (rpsD) from Geobacillus stearothermophilus (Bacillus stearothermophilus).